Reading from the N-terminus, the 493-residue chain is Glutamyl-tRNA(Gln) amidotransferase subunit A (493 aa).

Active-site charge relay system residues include Lys-79 and Ser-159. The active-site Acyl-ester intermediate is the Ser-183.

The protein belongs to the amidase family. GatA subfamily. Heterotrimer of A, B and C subunits.

It carries out the reaction L-glutamyl-tRNA(Gln) + L-glutamine + ATP + H2O = L-glutaminyl-tRNA(Gln) + L-glutamate + ADP + phosphate + H(+). Its function is as follows. Allows the formation of correctly charged Gln-tRNA(Gln) through the transamidation of misacylated Glu-tRNA(Gln) in organisms which lack glutaminyl-tRNA synthetase. The reaction takes place in the presence of glutamine and ATP through an activated gamma-phospho-Glu-tRNA(Gln). The sequence is that of Glutamyl-tRNA(Gln) amidotransferase subunit A from Rhizobium johnstonii (strain DSM 114642 / LMG 32736 / 3841) (Rhizobium leguminosarum bv. viciae).